A 361-amino-acid polypeptide reads, in one-letter code: Molybdopterin synthase catalytic subunit (361 aa).

Substrate is bound by residues 101–102 (HR), K117, and 124–126 (KKE).

The protein belongs to the MoaE family. MOCS2B subfamily. As to quaternary structure, heterotetramer; composed of 2 small (Mocs2A) and 2 large (Mocs2B) subunits.

It localises to the cytoplasm. The catalysed reaction is 2 [molybdopterin-synthase sulfur-carrier protein]-C-terminal-Gly-aminoethanethioate + cyclic pyranopterin phosphate + H2O = molybdopterin + 2 [molybdopterin-synthase sulfur-carrier protein]-C-terminal Gly-Gly + 2 H(+). It participates in cofactor biosynthesis; molybdopterin biosynthesis. In terms of biological role, catalytic subunit of the molybdopterin synthase complex, a complex that catalyzes the conversion of precursor Z into molybdopterin. Acts by mediating the incorporation of 2 sulfur atoms from thiocarboxylated Mocs2A into precursor Z to generate a dithiolene group. This chain is Molybdopterin synthase catalytic subunit, found in Drosophila pseudoobscura pseudoobscura (Fruit fly).